The following is a 219-amino-acid chain: Hemolysin-3 (219 aa).

Transmembrane regions (helical) follow at residues 19 to 39 (AITH…LIIH), 49 to 69 (VVAF…STLL), 83 to 103 (ILDH…FLLI), 112 to 132 (TLLA…IFFV), 138 to 158 (ASTL…KPLY), 165 to 185 (GFSL…FFLW), and 194 to 214 (IWHL…LFYV).

This sequence belongs to the UPF0073 (Hly-III) family.

The protein resides in the cell membrane. In terms of biological role, might be virulent against a mammalian host; when expressed in E.coli, the soluble extract has hemolytic activity on human erythrocytes. The activity is not inhibited by cholesterol or activated by 2-mercaptoethanol. Might be pore-forming protein. Its in vivo role in virulence is untested, nor has it been shown to be secreted by B.cereus. The polypeptide is Hemolysin-3 (Bacillus cereus).